We begin with the raw amino-acid sequence, 310 residues long: Coproporphyrin III ferrochelatase (310 aa).

Fe-coproporphyrin III contacts are provided by residues Tyr-13, Arg-30, 46-47, Ser-54, and Tyr-125; that span reads RY. 2 residues coordinate Fe(2+): His-183 and Glu-264.

Belongs to the ferrochelatase family.

The protein resides in the cytoplasm. The enzyme catalyses Fe-coproporphyrin III + 2 H(+) = coproporphyrin III + Fe(2+). Its pathway is porphyrin-containing compound metabolism; protoheme biosynthesis. In terms of biological role, involved in coproporphyrin-dependent heme b biosynthesis. Catalyzes the insertion of ferrous iron into coproporphyrin III to form Fe-coproporphyrin III. The protein is Coproporphyrin III ferrochelatase of Geobacillus sp. (strain WCH70).